Reading from the N-terminus, the 122-residue chain is UPF0102 protein VIBHAR_00890 (122 aa).

Belongs to the UPF0102 family.

This Vibrio campbellii (strain ATCC BAA-1116) protein is UPF0102 protein VIBHAR_00890.